The following is a 465-amino-acid chain: Cysteine--tRNA ligase (465 aa).

Zn(2+) is bound at residue C27. Residues 29 to 39 (PTVYDDAHLGH) carry the 'HIGH' region motif. C207, H237, and E241 together coordinate Zn(2+). Positions 269–273 (KMSKS) match the 'KMSKS' region motif. K272 serves as a coordination point for ATP.

It belongs to the class-I aminoacyl-tRNA synthetase family. Monomer. It depends on Zn(2+) as a cofactor.

The protein resides in the cytoplasm. The catalysed reaction is tRNA(Cys) + L-cysteine + ATP = L-cysteinyl-tRNA(Cys) + AMP + diphosphate. This Helicobacter pylori (strain HPAG1) protein is Cysteine--tRNA ligase.